Consider the following 154-residue polypeptide: Myoglobin (154 aa).

The Globin domain maps to 2 to 148; the sequence is VLSDAEWQLV…FRKDIAAKYK (147 aa). Position 4 is a phosphoserine (Ser-4). His-65 contributes to the nitrite binding site. His-65 lines the O2 pocket. Thr-68 is modified (phosphothreonine). His-94 serves as a coordination point for heme b.

The protein belongs to the globin family. In terms of assembly, monomeric.

It localises to the cytoplasm. The protein localises to the sarcoplasm. The enzyme catalyses Fe(III)-heme b-[protein] + nitric oxide + H2O = Fe(II)-heme b-[protein] + nitrite + 2 H(+). The catalysed reaction is H2O2 + AH2 = A + 2 H2O. In terms of biological role, monomeric heme protein which primary function is to store oxygen and facilitate its diffusion within muscle tissues. Reversibly binds oxygen through a pentacoordinated heme iron and enables its timely and efficient release as needed during periods of heightened demand. Depending on the oxidative conditions of tissues and cells, and in addition to its ability to bind oxygen, it also has a nitrite reductase activity whereby it regulates the production of bioactive nitric oxide. Under stress conditions, like hypoxia and anoxia, it also protects cells against reactive oxygen species thanks to its pseudoperoxidase activity. The chain is Myoglobin (MB) from Eschrichtius robustus (California gray whale).